The following is a 262-amino-acid chain: 4-hydroxy-2-oxo-heptane-1,7-dioate aldolase (262 aa).

His45 acts as the Proton acceptor in catalysis. Residue Gln147 participates in substrate binding. Glu149 is a binding site for a divalent metal cation. Ala174 and Asp175 together coordinate substrate. Asp175 lines the a divalent metal cation pocket.

This sequence belongs to the HpcH/HpaI aldolase family. As to quaternary structure, homohexamer; trimer of dimers. The cofactor is a divalent metal cation.

It catalyses the reaction 4-hydroxy-2-oxoheptanedioate = succinate semialdehyde + pyruvate. The catalysed reaction is D-glyceraldehyde + 3-hydroxypyruvate = (3R,4S,5R)-3,4,5,6-tetrahydroxy-2-oxohexanoate. It carries out the reaction D-glyceraldehyde + 3-hydroxypyruvate = 2-dehydro-D-gluconate. The enzyme catalyses D-glyceraldehyde + 3-hydroxypyruvate = 2-dehydro-D-galactonate. It catalyses the reaction D-glyceraldehyde + pyruvate = 2-dehydro-3-deoxy-L-galactonate. The catalysed reaction is 2-dehydro-3-deoxy-D-gluconate = D-glyceraldehyde + pyruvate. Its pathway is aromatic compound metabolism; 4-hydroxyphenylacetate degradation; pyruvate and succinate semialdehyde from 4-hydroxyphenylacetate: step 7/7. Its function is as follows. Catalyzes the reversible retro-aldol cleavage of 4-hydroxy-2-ketoheptane-1,7-dioate (HKHD) to pyruvate and succinic semialdehyde. In vitro, can catalyze the aldolisation reaction between hydroxypyruvate (HPA) or pyruvate (PA) and D-glyceraldehyde (D-GA). The condensation of hydroxypyruvate and D-glyceraldehyde produces (3R,4S,5R)-3,4,5,6-tetrahydroxy-2-oxohexanoate as the major product, 2-dehydro-D-gluconate and 2-dehydro-D-galactonate. The condensation of pyruvate and D-glyceraldehyde produces 2-dehydro-3-deoxy-L-galactonate as the major product and 2-dehydro-3-deoxy-D-gluconate. This is 4-hydroxy-2-oxo-heptane-1,7-dioate aldolase from Escherichia coli (strain ATCC 8739 / DSM 1576 / NBRC 3972 / NCIMB 8545 / WDCM 00012 / Crooks).